The chain runs to 503 residues: LEM domain-containing protein 2 (503 aa).

Alanine 2 bears the N-acetylalanine mark. The LEM domain occupies 2–42 (AGLSDLELRRELQALGFQPGPITDTTRDVYRNKLRRLRGEA). Positions 42 to 74 (ARLRDEERLREEARPRGEERLREEARLREDAPL) are enriched in basic and acidic residues. Disordered stretches follow at residues 42-97 (ARLR…SGSA) and 127-157 (AQLR…GPGL). The segment at 74–130 (LRARPAAASPRAEPWLSQPASGSAYATPGAYGDIRPSAASWVGSRGLAYPARPAQLR) is required for nuclear retention and interaction with LMNA isoform C. Over residues 75–87 (RARPAAASPRAEP) the composition is skewed to low complexity. A phosphoserine mark is found at serine 166 and serine 175. The interval 172–198 (LPSSLLGPDPRPGLRATRAGPAGAARA) is disordered. A compositionally biased stretch (low complexity) spans 184–197 (GLRATRAGPAGAAR). A run of 2 helical transmembrane segments spans residues 213–233 (LLLW…WVKM) and 377–397 (VTNV…LILL). The winged-Helix (WH) stretch occupies residues 395 to 503 (ILLKYRWRKL…KPSSFSDSER (109 aa)). Phosphoserine occurs at positions 497, 499, and 501.

In terms of assembly, interacts (via N-terminus) with LMNA isoform C (via C-terminus) (in vitro). Interacts (via LEM domain) with BANF1. Interacts (via C-terminus) with CHMP7. Interacts (via N-terminus) with tubulin; the interaction causes microtubule bundling and stabilization (in vitro). Post-translationally, phosphorylated; strongly phosphorylated in mitosis compared to G1/S. In terms of tissue distribution, ubiquitously expressed, including bone marrow, brain, kidney, colon, skeletal muscle, thymus, testis and uterus.

It localises to the nucleus inner membrane. The protein resides in the nucleus envelope. The protein localises to the cytoplasm. It is found in the cytoskeleton. Its subcellular location is the spindle. Nuclear lamina-associated inner nuclear membrane protein that is involved in nuclear structure organization, maintenance of nuclear envelope (NE) integrity and NE reformation after mitosis. Plays a role as transmembrane adapter for the endosomal sorting complexes required for transport (ESCRT), and is thereby involved in ESCRT-mediated NE reformation. Promotes ESCRT-mediated NE closure by recruiting CHMP7 and downstream ESCRT-III proteins IST1/CHMP8 and CHMP2A to the reforming NE during anaphase. During nuclear reassembly, condenses into a liquid-like coating around microtubule spindles and coassembles with CHMP7 to form a macromolecular O-ring seal at the confluence between membranes, chromatin, and the spindle to facilitate early nuclear sealing. Plays a role in the organization of heterochromatin associated with the NE and in the maintenance of NE organization under mechanical stress. Required for embryonic development and involved in regulation of several signaling pathways such as MAPK and AKT. Required for myoblast differentiation involving regulation of ERK signaling. Essential for cardiac homeostasis and proper heart function. In Homo sapiens (Human), this protein is LEM domain-containing protein 2 (LEMD2).